The primary structure comprises 368 residues: GLABROUS1 enhancer-binding protein-like (368 aa).

The disordered stretch occupies residues 1-123; that stretch reads MAPKKAEEVV…TSDTEHVKKP (123 aa). A compositionally biased stretch (acidic residues) spans 17 to 31; that stretch reads SEEEESGSSGEESES. Over residues 35-47 the composition is skewed to basic and acidic residues; that stretch reads VPKKVESSQKPES. Residues 84–97 are compositionally biased toward polar residues; the sequence is TSGSAATVPESSTA. Over residues 100–123 the composition is skewed to basic and acidic residues; it reads PLKEAAPEAIKKQKTSDTEHVKKP.

This sequence belongs to the GeBP family. Mono-, di- and oligomers. Associated with the Mediator complex. Interacts with MED6. Interacts with MED10A, MED28 and MED32. Interacts with DEK3.

It localises to the nucleus. Functionally, transcription factor that binds promoters containing the CryR2 element, 5'-ACATAWCT-3'. The DNA-binding activity is decreased upon direct physical interaction with the mediator subunits and is modulated by redox conditions. The oxidized protein is the preferential binding form. The polypeptide is GLABROUS1 enhancer-binding protein-like (Arabidopsis thaliana (Mouse-ear cress)).